We begin with the raw amino-acid sequence, 449 residues long: Phosphoglucosamine mutase (449 aa).

Serine 100 functions as the Phosphoserine intermediate in the catalytic mechanism. Residues serine 100, aspartate 241, aspartate 243, and aspartate 245 each contribute to the Mg(2+) site. A Phosphoserine modification is found at serine 100.

It belongs to the phosphohexose mutase family. Mg(2+) is required as a cofactor. Post-translationally, activated by phosphorylation.

It carries out the reaction alpha-D-glucosamine 1-phosphate = D-glucosamine 6-phosphate. In terms of biological role, catalyzes the conversion of glucosamine-6-phosphate to glucosamine-1-phosphate. This is Phosphoglucosamine mutase from Clostridium botulinum (strain Loch Maree / Type A3).